The sequence spans 537 residues: CTP synthase (537 aa).

Residues 1-269 (MNQTKYIFVT…DKVALKKLDL (269 aa)) are amidoligase domain. A CTP-binding site is contributed by Ser-15. Ser-15 contacts UTP. An ATP-binding site is contributed by 16-21 (SLGKGI). Position 56 (Tyr-56) interacts with L-glutamine. Residue Asp-73 participates in ATP binding. Residues Asp-73 and Glu-143 each coordinate Mg(2+). CTP contacts are provided by residues 150 to 152 (DIE), 190 to 195 (KTKPTQ), and Lys-226. UTP is bound by residues 190–195 (KTKPTQ) and Lys-226. Positions 295–537 (SIGLVGKYVE…IAAAVKHKNK (243 aa)) constitute a Glutamine amidotransferase type-1 domain. An L-glutamine-binding site is contributed by Gly-357. Cys-384 acts as the Nucleophile; for glutamine hydrolysis in catalysis. L-glutamine-binding positions include 385–388 (LGMQ), Glu-408, and Arg-465. Residues His-510 and Glu-512 contribute to the active site.

It belongs to the CTP synthase family. In terms of assembly, homotetramer.

The enzyme catalyses UTP + L-glutamine + ATP + H2O = CTP + L-glutamate + ADP + phosphate + 2 H(+). It catalyses the reaction L-glutamine + H2O = L-glutamate + NH4(+). The catalysed reaction is UTP + NH4(+) + ATP = CTP + ADP + phosphate + 2 H(+). Its pathway is pyrimidine metabolism; CTP biosynthesis via de novo pathway; CTP from UDP: step 2/2. Its activity is regulated as follows. Allosterically activated by GTP, when glutamine is the substrate; GTP has no effect on the reaction when ammonia is the substrate. The allosteric effector GTP functions by stabilizing the protein conformation that binds the tetrahedral intermediate(s) formed during glutamine hydrolysis. Inhibited by the product CTP, via allosteric rather than competitive inhibition. Functionally, catalyzes the ATP-dependent amination of UTP to CTP with either L-glutamine or ammonia as the source of nitrogen. Regulates intracellular CTP levels through interactions with the four ribonucleotide triphosphates. This is CTP synthase from Flavobacterium psychrophilum (strain ATCC 49511 / DSM 21280 / CIP 103535 / JIP02/86).